A 374-amino-acid polypeptide reads, in one-letter code: Histidine biosynthesis bifunctional protein HisB (374 aa).

The histidinol-phosphatase stretch occupies residues 1–183 (MKKKVLFIDR…RVAEFLFAGE (183 aa)). Asp-9 acts as the Nucleophile in catalysis. Residues Asp-9, Asp-11, and Asp-131 each coordinate Mg(2+). Asp-11 serves as the catalytic Proton donor. An imidazoleglycerol-phosphate dehydratase region spans residues 184-374 (RRAEIRRTTK…FELPSSKGVL (191 aa)).

In the N-terminal section; belongs to the histidinol-phosphatase family. It in the C-terminal section; belongs to the imidazoleglycerol-phosphate dehydratase family. Requires Mg(2+) as cofactor.

The protein resides in the cytoplasm. It catalyses the reaction D-erythro-1-(imidazol-4-yl)glycerol 3-phosphate = 3-(imidazol-4-yl)-2-oxopropyl phosphate + H2O. The enzyme catalyses L-histidinol phosphate + H2O = L-histidinol + phosphate. The protein operates within amino-acid biosynthesis; L-histidine biosynthesis; L-histidine from 5-phospho-alpha-D-ribose 1-diphosphate: step 6/9. It functions in the pathway amino-acid biosynthesis; L-histidine biosynthesis; L-histidine from 5-phospho-alpha-D-ribose 1-diphosphate: step 8/9. This is Histidine biosynthesis bifunctional protein HisB from Bacteroides fragilis (strain ATCC 25285 / DSM 2151 / CCUG 4856 / JCM 11019 / LMG 10263 / NCTC 9343 / Onslow / VPI 2553 / EN-2).